A 154-amino-acid polypeptide reads, in one-letter code: CASP-like protein 5B3 (154 aa).

Topologically, residues Met1–Arg17 are cytoplasmic. Residues Val18–Ser38 form a helical membrane-spanning segment. Asn39 is a glycosylation site (N-linked (GlcNAc...) asparagine). Residues Asn39–Ala42 lie on the Extracellular side of the membrane. A helical membrane pass occupies residues Phe43 to Leu63. The Cytoplasmic segment spans residues Asp64–Pro77. Residues Val78–Ala98 form a helical membrane-spanning segment. Topologically, residues Ser99–Ser129 are extracellular. The chain crosses the membrane as a helical span at residues Val130–Leu150. At Leu151–Leu154 the chain is on the cytoplasmic side.

This sequence belongs to the Casparian strip membrane proteins (CASP) family. In terms of assembly, homodimer and heterodimers.

Its subcellular location is the cell membrane. This is CASP-like protein 5B3 from Oryza sativa subsp. indica (Rice).